We begin with the raw amino-acid sequence, 771 residues long: MANSSLLRVVLVALLLLGSVTVSAGDGRGTPIAFQAEVSKMLDILVNSLYTNRAVFLRELISNGSDALDKIRVLYLTSPKEPLTKDGEAPTMDLRISFDKEKSELILRDGGVGMTKEELAKHLGSLGTSGTKHFLEKLQEGVGAVGGDQNNLIGQFGVGFYSVFLVGDRVRVASKSDDSDEQYVWESKGDGQYFLYPDPRGNTLGRGTEITIELKPDAEQFLSAETIKKTIHQYSEFINFPIYVQEEVEVASTAATPESAAEERSLDEGAVEEDPDKEGDTQGVVKEKRWTLVNENRPIWTRPIGNVTEEEYHKFYKAFSGDYRDPLYFNHFKVEGEVDFDSILFVPTTVDPASFSDDNAVPNTNIKLYVRRVFITDEFRDLLPRYLNFVKGIVDSNDLPLNVSREVLQESRILRVIKKKLVRKTLSMFADIAAQDEAIANGKQVENPAPSGHTHLKKPAYTKFWELYGKHLRLGVMLDSNNRNRLTKLFRYKSSRSESEYISLQTYVDRMKKGQKGIYYLSGDSVARIKKSPVLEDAVNHDVEVIFMTDAIDEYVVSQLTDFAGKKLINLAKEGVQFEESDARQRVVDRKRKEKYDSFFTHLRALFGYSEVRKVILTKRMTNEAFIVSSSENQITARLASIMRGQSMSLANQQLTAERVLEVNYRHPLVDEMFKRFTVDEDDEVATDIAWVLYDTANLQAEFPVADVAAYSKRINRLLRSSVDLSADDSLLPPDDAEYTVSDTETEEEEEQPKVDTNAHEEAETDGEGDL.

Residues 1 to 24 (MANSSLLRVVLVALLLLGSVTVSA) form the signal peptide. Residues asparagine 63, aspartate 109, and phenylalanine 160 each contribute to the ATP site. The N-linked (GlcNAc...) asparagine glycan is linked to asparagine 63. A disordered region spans residues 254–282 (AATPESAAEERSLDEGAVEEDPDKEGDTQ). 2 N-linked (GlcNAc...) asparagine glycosylation sites follow: asparagine 306 and asparagine 402. The disordered stretch occupies residues 727-771 (ADDSLLPPDDAEYTVSDTETEEEEEQPKVDTNAHEEAETDGEGDL). Basic and acidic residues predominate over residues 752 to 762 (QPKVDTNAHEE). Residues 768-771 (EGDL) carry the Prevents secretion from ER motif.

The protein belongs to the heat shock protein 90 family. As to quaternary structure, homotetramer.

The protein localises to the endoplasmic reticulum. In terms of biological role, molecular chaperone that functions in the processing and transport of secreted proteins. Required for the synthesis of lipophosphoglycan (LPG), a cell surface glycoconjugate. Necessary for the attachment of the galactosyl residue to the mannose within the phosphoglycan repeats of the nascent LPG chain. Also required for addition of phosphoglycan to acid phosphatase. Not required for normal growth. Has ATPase activity. Binds heparin with micromolar affinity which may facilitate infection of host cells. This chain is Endoplasmin homolog, found in Leishmania donovani.